A 516-amino-acid polypeptide reads, in one-letter code: Polyprenol-phosphate-mannose--protein mannosyltransferase (516 aa).

The next 9 helical transmembrane spans lie at 113-133, 143-163, 166-186, 234-254, 275-295, 384-404, 413-433, 437-457, and 473-493; these read YNGL…VMLV, STLV…SFVS, TALL…CLMV, WSGL…DAIA, AAYV…APWF, VMLV…GWAL, WRYG…FADI, MYFF…ALIL, and LGLL…AWMY.

It belongs to the glycosyltransferase 39 family.

The protein resides in the cell membrane. It participates in protein modification; protein glycosylation. In terms of biological role, protein O-mannosyltransferase that catalyzes the transfer of a single mannose residue from a polyprenol phospho-mannosyl lipidic donor to the hydroxyl group of selected serine and threonine residues in acceptor proteins. The polypeptide is Polyprenol-phosphate-mannose--protein mannosyltransferase (Mycolicibacterium smegmatis (strain ATCC 700084 / mc(2)155) (Mycobacterium smegmatis)).